A 109-amino-acid chain; its full sequence is AFAGILSDADIAAGLQSCQAADSFSCKTFFAKSGLHSKSKDQLTKVFGVIDRDKSGYIEEDELKKFLQNFDGKARDLTDKETAEFLKEGDTDGDGKIGVEEFVVLVTKG.

EF-hand domains lie at 38 to 73 and 77 to 109; these read KSKD…FDGK and LTDK…VTKG. Residues aspartate 51, aspartate 53, serine 55, tyrosine 57, glutamate 59, glutamate 62, aspartate 90, aspartate 92, aspartate 94, lysine 96, and glutamate 101 each coordinate Ca(2+).

Belongs to the parvalbumin family.

Functionally, in muscle, parvalbumin is thought to be involved in relaxation after contraction. It binds two calcium ions. This Boa constrictor (Boa) protein is Parvalbumin beta.